A 444-amino-acid chain; its full sequence is Proline--tRNA ligase (444 aa).

The protein belongs to the class-II aminoacyl-tRNA synthetase family. ProS type 2 subfamily. In terms of assembly, homodimer.

It localises to the cytoplasm. It catalyses the reaction tRNA(Pro) + L-proline + ATP = L-prolyl-tRNA(Pro) + AMP + diphosphate. Functionally, catalyzes the attachment of proline to tRNA(Pro) in a two-step reaction: proline is first activated by ATP to form Pro-AMP and then transferred to the acceptor end of tRNA(Pro). The chain is Proline--tRNA ligase from Methylobacterium sp. (strain 4-46).